The sequence spans 229 residues: Potassium/proton antiporter CemA (229 aa).

The next 4 helical transmembrane spans lie at 7–27 (FTPL…SLSF), 114–134 (IICF…LVIL), 154–174 (ILLL…ELMV), and 189–209 (IISG…KYWI).

It belongs to the CemA family.

It is found in the plastid. The protein localises to the chloroplast inner membrane. It catalyses the reaction K(+)(in) + H(+)(out) = K(+)(out) + H(+)(in). Contributes to K(+)/H(+) antiport activity by supporting proton efflux to control proton extrusion and homeostasis in chloroplasts in a light-dependent manner to modulate photosynthesis. Prevents excessive induction of non-photochemical quenching (NPQ) under continuous-light conditions. Indirectly promotes efficient inorganic carbon uptake into chloroplasts. The sequence is that of Potassium/proton antiporter CemA from Coffea arabica (Arabian coffee).